Consider the following 273-residue polypeptide: Cell division cycle-associated protein 3 (273 aa).

Disordered stretches follow at residues 1 to 231 and 251 to 273; these read MGST…ALSE and GGGA…LMES. A phosphoserine mark is found at S29 and S31. Residues 32–45 show a composition bias toward polar residues; it reads AGIQRTPIQVESSP. T37 is modified (phosphothreonine). Phosphoserine occurs at positions 44 and 67. T75 is modified (phosphothreonine). The F-box-like stretch occupies residues 90 to 124; sequence KELSEVFETEVSETEVSESISSPVLGLPQETPLSS. S93 is subject to Phosphoserine. The segment covering 94–105 has biased composition (acidic residues); it reads EVFETEVSETEV. Polar residues-rich tracts occupy residues 144–154 and 164–175; these read PWSQTELNSKQ and STETMVSGQTSD. Position 204 is a phosphoserine (S204). Phosphothreonine is present on T207. A compositionally biased stretch (polar residues) spans 210–220; that stretch reads QDDNSPGTLTL. S214 carries the phosphoserine modification. T217 is modified (phosphothreonine). The short motif at 263-265 is the KEN box element; sequence KEN.

As to quaternary structure, interacts with SKP1. Part of a SCF (SKP1-cullin-F-box) protein ligase complex. Post-translationally, ubiquitinated and degraded by the APC/C-Cdh1 complex.

It is found in the cytoplasm. Its subcellular location is the cytosol. Its pathway is protein modification; protein ubiquitination. Its function is as follows. F-box-like protein which is required for entry into mitosis. Acts by participating in E3 ligase complexes that mediate the ubiquitination and degradation of WEE1 kinase at G2/M phase. This Rattus norvegicus (Rat) protein is Cell division cycle-associated protein 3 (Cdca3).